The following is a 208-amino-acid chain: LexA repressor (208 aa).

The H-T-H motif DNA-binding region spans 28–48 (VREIGEAVGLASSSTVHGHLA). Catalysis depends on for autocatalytic cleavage activity residues serine 130 and lysine 168.

The protein belongs to the peptidase S24 family. As to quaternary structure, homodimer.

The catalysed reaction is Hydrolysis of Ala-|-Gly bond in repressor LexA.. In terms of biological role, represses a number of genes involved in the response to DNA damage (SOS response), including recA and lexA. In the presence of single-stranded DNA, RecA interacts with LexA causing an autocatalytic cleavage which disrupts the DNA-binding part of LexA, leading to derepression of the SOS regulon and eventually DNA repair. This Shouchella clausii (strain KSM-K16) (Alkalihalobacillus clausii) protein is LexA repressor.